The sequence spans 434 residues: MNIVVVGLSHKTASVDIREKVAFAPTQMEKPLRALLAIEDIAEAVIVSTCNRVEVYISTRDIAGGMARIKRFLADYHGISPEILEPHLYAHHGEAAIRHVFRVASSLDSMVVGEPQILGQIKTAYGYAAEFKTSGIILNRFLHKAFSVAKRVRTETKIASSAVSVSFAAVELARKIFGNLSDKTVMLIGAGEMCELAAKHFINNGVRGVMVTNRTYERAVKLAEEFEGKPVSFDDLFDQLHKADIVLSSTGATQFIIKPKDVEEVIRRRKLKPMFFIDIAVPRDIDPKVNDVENVYLYDMDDLQGVVASNLQQRAEEAKKAEAIIDEEIGQFHKWLSNLEVTPTIVALRSKFEETRKAELEKTLASWKDLPPDGAKRLEALTTAIVNKLLHPPTATLKRVGQGGRTDLYVDALRTLFELQTGESEAEELGELEE.

Residues 49–52 (TCNR), serine 109, 114–116 (EPQ), and glutamine 120 each bind substrate. Cysteine 50 (nucleophile) is an active-site residue. 189–194 (GAGEMC) lines the NADP(+) pocket.

It belongs to the glutamyl-tRNA reductase family. Homodimer.

The catalysed reaction is (S)-4-amino-5-oxopentanoate + tRNA(Glu) + NADP(+) = L-glutamyl-tRNA(Glu) + NADPH + H(+). Its pathway is porphyrin-containing compound metabolism; protoporphyrin-IX biosynthesis; 5-aminolevulinate from L-glutamyl-tRNA(Glu): step 1/2. In terms of biological role, catalyzes the NADPH-dependent reduction of glutamyl-tRNA(Glu) to glutamate 1-semialdehyde (GSA). This is Glutamyl-tRNA reductase from Geobacter metallireducens (strain ATCC 53774 / DSM 7210 / GS-15).